The following is a 151-amino-acid chain: 3-hydroxyacyl-[acyl-carrier-protein] dehydratase FabZ (151 aa).

Residue His54 is part of the active site.

The protein belongs to the thioester dehydratase family. FabZ subfamily.

Its subcellular location is the cytoplasm. It carries out the reaction a (3R)-hydroxyacyl-[ACP] = a (2E)-enoyl-[ACP] + H2O. Functionally, involved in unsaturated fatty acids biosynthesis. Catalyzes the dehydration of short chain beta-hydroxyacyl-ACPs and long chain saturated and unsaturated beta-hydroxyacyl-ACPs. This Cronobacter sakazakii (strain ATCC BAA-894) (Enterobacter sakazakii) protein is 3-hydroxyacyl-[acyl-carrier-protein] dehydratase FabZ.